Here is a 166-residue protein sequence, read N- to C-terminus: Small ribosomal subunit protein uS5 (166 aa).

The region spanning 12-75 is the S5 DRBM domain; it reads YIEKLVQVNR…EAARRNMIQV (64 aa).

It belongs to the universal ribosomal protein uS5 family. As to quaternary structure, part of the 30S ribosomal subunit. Contacts proteins S4 and S8.

Functionally, with S4 and S12 plays an important role in translational accuracy. Its function is as follows. Located at the back of the 30S subunit body where it stabilizes the conformation of the head with respect to the body. The sequence is that of Small ribosomal subunit protein uS5 from Azotobacter vinelandii (strain DJ / ATCC BAA-1303).